The chain runs to 425 residues: Serine--tRNA ligase (425 aa).

An L-serine-binding site is contributed by T233–E235. R264 to E266 contacts ATP. Position 287 (E287) interacts with L-serine. ATP is bound at residue E351–S354. Position 385 (S385) interacts with L-serine.

It belongs to the class-II aminoacyl-tRNA synthetase family. Type-1 seryl-tRNA synthetase subfamily. In terms of assembly, homodimer. The tRNA molecule binds across the dimer.

It is found in the cytoplasm. The enzyme catalyses tRNA(Ser) + L-serine + ATP = L-seryl-tRNA(Ser) + AMP + diphosphate + H(+). It catalyses the reaction tRNA(Sec) + L-serine + ATP = L-seryl-tRNA(Sec) + AMP + diphosphate + H(+). The protein operates within aminoacyl-tRNA biosynthesis; selenocysteinyl-tRNA(Sec) biosynthesis; L-seryl-tRNA(Sec) from L-serine and tRNA(Sec): step 1/1. Its function is as follows. Catalyzes the attachment of serine to tRNA(Ser). Is also able to aminoacylate tRNA(Sec) with serine, to form the misacylated tRNA L-seryl-tRNA(Sec), which will be further converted into selenocysteinyl-tRNA(Sec). This is Serine--tRNA ligase from Prochlorococcus marinus (strain MIT 9215).